Here is a 374-residue protein sequence, read N- to C-terminus: C-C chemokine receptor type 2 (374 aa).

Residues 1–42 (MLSTSRSRFIRNTNESGEEVTTFFDYDYGAPCHKFDVKQIGA) lie on the Extracellular side of the membrane. An N-linked (GlcNAc...) asparagine glycan is attached at Asn14. Tyr26 carries the sulfotyrosine modification. The chain crosses the membrane as a helical span at residues 43–70 (QLLPPLYSLVFIFGFVGNMLVVLILINC). The Cytoplasmic segment spans residues 71–80 (KKLKCLTDIY). Residues 81–100 (LLNLAISDLLFLITLPLWAH) form a helical membrane-spanning segment. At 101-114 (SAANEWVFGNAMCK) the chain is on the extracellular side. Cys113 and Cys190 are disulfide-bonded. The chain crosses the membrane as a helical span at residues 115–136 (LFTGLYHIGYFGGIFFIILLTI). At 137-153 (DRYLAIVHAVFALKART) the chain is on the cytoplasmic side. At Tyr139 the chain carries Phosphotyrosine; by JAK2. Residues 154–178 (VTFGVVTSVITWLVAVFASVPGIIF) traverse the membrane as a helical segment. Topologically, residues 179 to 206 (TKCQKEDSVYVCGPYFPRGWNNFHTIMR) are extracellular. The chain crosses the membrane as a helical span at residues 207–226 (NILGLVLPLLIMVICYSGIL). Over 227-243 (KTLLRCRNEKKRHRAVR) the chain is Cytoplasmic. The chain crosses the membrane as a helical span at residues 244-268 (VIFTIMIVYFLFWTPYNIVILLNTF). At 269–285 (QEFFGLSNCESTSQLDQ) the chain is on the extracellular side. Residues 286 to 309 (ATQVTETLGMTHCCINPIIYAFVG) form a helical membrane-spanning segment. The Cytoplasmic portion of the chain corresponds to 310-374 (EKFRSLFHIA…EASLQDKEGA (65 aa)). The interval 348–374 (QGLLDGRGKGKSIGRAPEASLQDKEGA) is disordered.

It belongs to the G-protein coupled receptor 1 family. Interacts with ARRB1. Interacts (via extracellular N-terminal region) with beta-defensin DEFB106A/DEFB106B; this interaction may preferentially require specific tyrosine sulfation on CCR2. Interacts with NUP85; the interaction is required for CCR2 clusters formation on the cell membrane and CCR2 signaling. In terms of assembly, (Microbial infection) Binds to HIV-1 Tat. Post-translationally, N-glycosylated. Sulfation increases the affinity for both monomeric and dimeric CCL2 with stronger binding to the monomeric form. Binding of sulfated CCR2 to CCL2 promotes conversion of CCL2 from dimer to monomer. As to expression, expressed by monocytes and IL2-activated NK cells. Abundantly expressed on CD14+/CD16- monocytes and weakly on CD14+/CD16+ monocytes, type 2 dendritic cells (DCs) and plasmacytoid DCs (at protein level).

Its subcellular location is the cell membrane. Functionally, key functional receptor for CCL2 but can also bind CCL7, and CCL12. Also transduces signaling mediated by CCL13. Its binding with CCL2 on monocytes and macrophages mediates chemotaxis and migration induction through the activation of the PI3K cascade, the small G protein Rac and lamellipodium protrusion. Also acts as a receptor for the beta-defensin DEFB106A/DEFB106B. Regulates the expression of T-cell inflammatory cytokines and T-cell differentiation, promoting the differentiation of T-cells into T-helper 17 cells (Th17) during inflammation. Facilitates the export of mature thymocytes by enhancing directional movement of thymocytes to sphingosine-1-phosphate stimulation and up-regulation of S1P1R expression; signals through the JAK-STAT pathway to regulate FOXO1 activity leading to an increased expression of S1P1R. Plays an important role in mediating peripheral nerve injury-induced neuropathic pain. Increases NMDA-mediated synaptic transmission in both dopamine D1 and D2 receptor-containing neurons, which may be caused by MAPK/ERK-dependent phosphorylation of GRIN2B/NMDAR2B. Mediates the recruitment of macrophages and monocytes to the injury site following brain injury. (Microbial infection) Alternative coreceptor with CD4 for HIV-1 infection. In Homo sapiens (Human), this protein is C-C chemokine receptor type 2 (CCR2).